We begin with the raw amino-acid sequence, 758 residues long: Relaxin receptor 1 (758 aa).

The Extracellular portion of the chain corresponds to 1–408 (MTSGPFFFCV…LENLLASIIQ (408 aa)). Residues 26 to 63 (SCPLGSFPCGNISKCLPQLLHCNGVDDCGNQADEDNCG) enclose the LDL-receptor class A domain. 3 cysteine pairs are disulfide-bonded: Cys-27–Cys-40, Cys-34–Cys-53, and Cys-47–Cys-62. The N-linked (GlcNAc...) asparagine glycan is linked to Asn-36. Residues Leu-45, Asn-48, Val-50, Asp-52, Asp-58, and Glu-59 each coordinate Ca(2+). LRR repeat units lie at residues 105-125 (LCRD…PSVS), 126-148 (SNVT…SFRK), 149-172 (YHDL…AFRG), 173-196 (LHSL…VFED), 198-220 (HRLE…TFYG), 221-244 (LNSL…PLCQ), 246-269 (MPRL…TFIS), 270-293 (CNNL…AFTH), 294-317 (LQKL…IFKD), 319-341 (KELS…QFDY), and 342-365 (LAKL…MFRP). A glycan (N-linked (GlcNAc...) asparagine) is linked at Asn-127. Residues Asn-264 and Asn-272 are each glycosylated (N-linked (GlcNAc...) asparagine). Asn-325 is a glycosylation site (N-linked (GlcNAc...) asparagine). N-linked (GlcNAc...) asparagine glycosylation occurs at Asn-368. A helical transmembrane segment spans residues 409 to 429 (RVFVWVVSAITCFGNIFVICM). Residues 430–443 (RPYIRSENKLHAMS) are Cytoplasmic-facing. Residues 444–464 (IMSLCCADCLMGVYLFVIGAF) traverse the membrane as a helical segment. Residues 465–486 (DLKFRGEYRKHAQPWMESVHCQ) are Extracellular-facing. Cys-485 and Cys-563 are disulfide-bonded. The helical transmembrane segment at 487–507 (FMGSLAVLSTEVSVLLLTFLT) threads the bilayer. Topologically, residues 508–527 (LEKYICIVYPFRCLRPRKCR) are cytoplasmic. Residues 528-548 (TVAVLIFIWITGFIVAFAPLG) form a helical membrane-spanning segment. At 549–577 (NKEFFKNYYGTNGVCFPLHSEDTGSTGAQ) the chain is on the extracellular side. A helical transmembrane segment spans residues 578–598 (IYSVVIFLGINLVAFIIIVFS). At 599-629 (YGSMFYSVHQSTITATEIQKQVKKEMILAKR) the chain is on the cytoplasmic side. The helical transmembrane segment at 630 to 650 (FFFIVFTDALCWIPIFILKFL) threads the bilayer. Residues 651 to 660 (SLIRVEIPDT) are Extracellular-facing. The helical transmembrane segment at 661 to 681 (ITSWVVIFILPINSALNPIIY) threads the bilayer. Residues 682–758 (TLTTRPFKEM…SRSSRLNSYS (77 aa)) lie on the Cytoplasmic side of the membrane.

The protein belongs to the G-protein coupled receptor 1 family. As to quaternary structure, interacts with C1QTNF8. Detected in brain cortex, and at low levels in testis.

It localises to the cell membrane. In terms of biological role, receptor for relaxins. The activity of this receptor is mediated by G proteins leading to stimulation of adenylate cyclase and an increase of cAMP. Binding of the ligand may also activate a tyrosine kinase pathway that inhibits the activity of a phosphodiesterase that degrades cAMP. The sequence is that of Relaxin receptor 1 (Rxfp1) from Rattus norvegicus (Rat).